Consider the following 533-residue polypeptide: MGNCCASPGSETGSKKGKPKIKSNPFYSEAYTTNGSGTGFKLSVLKDPTGHDISLMYDLGREVGRGEFGITYLCTDIKTGEKYACKSISKKKLRTAVDIEDVRREVEIMKHMPRHPNIVSLKDAFEDDDAVHIVMELCEGGELFDRIVARGHYTERAAAAVMKTILEVVQICHKHGVMHRDLKPENFLFANKKETSALKAIDFGLSVFFKPGEGFNEIVGSPYYMAPEVLRRNYGPEVDIWSAGVILYILLCGVPPFWAETEQGVAQAIIRSVIDFKRDPWPRVSETAKDLVRKMLEPDPKKRLSAAQVLEHSWIQNAKKAPNVSLGETVKARLKQFSVMNKLKKRALRVIAEHLSVEEVAGIKEAFEMMDSKKTGKINLEELKFGLHKLGQQQIPDTDLQILMEAADVDGDGTLNYGEFVAVSVHLKKMANDEHLHKAFSFFDQNQSDYIEIEELREALNDEVDTNSEEVVAAIMQDVDTDKDGRISYEEFAAMMKAGTDWRKASRQYSRERFNSLSLKLMREGSLQLEGEN.

The disordered stretch occupies residues 1 to 21 (MGNCCASPGSETGSKKGKPKI). Residue glycine 2 is the site of N-myristoyl glycine attachment. Residues 57-315 (YDLGREVGRG…AAQVLEHSWI (259 aa)) form the Protein kinase domain. ATP is bound by residues 63-71 (VGRGEFGIT) and lysine 86. Catalysis depends on aspartate 181, which acts as the Proton acceptor. Serine 221 bears the Phosphoserine mark. The segment at 321-351 (APNVSLGETVKARLKQFSVMNKLKKRALRVI) is autoinhibitory domain. 4 consecutive EF-hand domains span residues 358–394 (EEVA…GQQQ), 395–430 (IPDT…LKKM), 431–466 (ANDE…EVDT), and 467–502 (NSEE…GTDW). Ca(2+) is bound by residues aspartate 371, threonine 375, lysine 377, glutamate 382, aspartate 408, aspartate 410, aspartate 412, threonine 414, glutamate 419, aspartate 444, asparagine 446, serine 448, tyrosine 450, glutamate 455, aspartate 480, aspartate 482, aspartate 484, and arginine 486. Residue serine 488 is modified to Phosphoserine. Glutamate 491 serves as a coordination point for Ca(2+). Serine 526 carries the post-translational modification Phosphoserine.

This sequence belongs to the protein kinase superfamily. Ser/Thr protein kinase family. CDPK subfamily.

Its subcellular location is the cell membrane. The catalysed reaction is L-seryl-[protein] + ATP = O-phospho-L-seryl-[protein] + ADP + H(+). It catalyses the reaction L-threonyl-[protein] + ATP = O-phospho-L-threonyl-[protein] + ADP + H(+). Its activity is regulated as follows. Activated by calcium. Autophosphorylation may play an important role in the regulation of the kinase activity. In terms of biological role, may play a role in signal transduction pathways that involve calcium as a second messenger. The polypeptide is Calcium-dependent protein kinase 8 (CPK8) (Arabidopsis thaliana (Mouse-ear cress)).